A 1216-amino-acid chain; its full sequence is ATP-dependent helicase/nuclease subunit A (1216 aa).

The UvrD-like helicase ATP-binding domain occupies 26–488 (QKKTAEQIEA…ILLKANFRSS (463 aa)). 47–54 (ASAGSGKT) is a binding site for ATP. The 288-residue stretch at 515–802 (KHQLVFANTK…ELMTIHKSKG (288 aa)) folds into the UvrD-like helicase C-terminal domain.

Belongs to the helicase family. AddA subfamily. As to quaternary structure, heterodimer of AddA and AddB/RexB. Mg(2+) is required as a cofactor.

It catalyses the reaction Couples ATP hydrolysis with the unwinding of duplex DNA by translocating in the 3'-5' direction.. The enzyme catalyses ATP + H2O = ADP + phosphate + H(+). Functionally, the heterodimer acts as both an ATP-dependent DNA helicase and an ATP-dependent, dual-direction single-stranded exonuclease. Recognizes the chi site generating a DNA molecule suitable for the initiation of homologous recombination. The AddA nuclease domain is required for chi fragment generation; this subunit has the helicase and 3' -&gt; 5' nuclease activities. In Streptococcus pneumoniae (strain ATCC 700669 / Spain 23F-1), this protein is ATP-dependent helicase/nuclease subunit A.